The primary structure comprises 300 residues: MQMENLITTFPEIEIKEHEPLAHYTNTKTGGPADWLAFPVDVAQVQQLVDYCHQTGLALTVIGNASNLIVRDGGIEGLVMILTRMQTVKVEGTMVTAAAGASYIEVTKIARDHSLTGLEFAAGIPGSIGGAIFMNAGAYGGETKTVVDHVTVMERDGQIHQLSNEEMDFGYRHSAVQASGAIVLDATFALKLGDQNAITAQMEDLNARRAAKQPLELPSCGSVFKRPTGYFAGKLIHDAGLQGYTSGGAQVSTKHAGFIVNVNHGTATDYLNVIHHVQETVQEKFGVQLETEVRIIGRQS.

The FAD-binding PCMH-type domain occupies 28-193; sequence KTGGPADWLA…LDATFALKLG (166 aa). Arg172 is an active-site residue. Catalysis depends on Ser222, which acts as the Proton donor. Residue Glu292 is part of the active site.

This sequence belongs to the MurB family. The cofactor is FAD.

The protein resides in the cytoplasm. The enzyme catalyses UDP-N-acetyl-alpha-D-muramate + NADP(+) = UDP-N-acetyl-3-O-(1-carboxyvinyl)-alpha-D-glucosamine + NADPH + H(+). The protein operates within cell wall biogenesis; peptidoglycan biosynthesis. Its function is as follows. Cell wall formation. The chain is UDP-N-acetylenolpyruvoylglucosamine reductase from Limosilactobacillus fermentum (strain NBRC 3956 / LMG 18251) (Lactobacillus fermentum).